The following is a 160-amino-acid chain: MAPK regulated corepressor interacting protein 2 (160 aa).

Methionine 1 carries the post-translational modification N-acetylmethionine. Residues 1–64 (MYTITKGPSK…GPWPLSSPGP (64 aa)) form a disordered region. Arginine 35 is subject to Omega-N-methylarginine. Pro residues predominate over residues 37–61 (PAPPTSQPPRAQPFAQPPGPWPLSS). Position 61 is a phosphoserine (serine 61). Arginine 65 carries the post-translational modification Omega-N-methylarginine. Position 82 is a phosphoserine (serine 82).

It belongs to the MCRIP family. As to quaternary structure, interacts with DDX6. Interacts with MCRIP1.

The protein localises to the cytoplasm. The protein resides in the stress granule. Its subcellular location is the nucleus. This chain is MAPK regulated corepressor interacting protein 2 (MCRIP2), found in Homo sapiens (Human).